Here is a 165-residue protein sequence, read N- to C-terminus: NADH-quinone oxidoreductase subunit I (165 aa).

2 consecutive 4Fe-4S ferredoxin-type domains span residues His-66–Thr-98 and Ser-109–Gly-138. [4Fe-4S] cluster is bound by residues Cys-78, Cys-81, Cys-84, Cys-88, Cys-118, Cys-121, Cys-124, and Cys-128.

It belongs to the complex I 23 kDa subunit family. In terms of assembly, NDH-1 is composed of 14 different subunits. Subunits NuoA, H, J, K, L, M, N constitute the membrane sector of the complex. Requires [4Fe-4S] cluster as cofactor.

The protein localises to the cell inner membrane. It catalyses the reaction a quinone + NADH + 5 H(+)(in) = a quinol + NAD(+) + 4 H(+)(out). NDH-1 shuttles electrons from NADH, via FMN and iron-sulfur (Fe-S) centers, to quinones in the respiratory chain. The immediate electron acceptor for the enzyme in this species is believed to be ubiquinone. Couples the redox reaction to proton translocation (for every two electrons transferred, four hydrogen ions are translocated across the cytoplasmic membrane), and thus conserves the redox energy in a proton gradient. The sequence is that of NADH-quinone oxidoreductase subunit I from Campylobacter fetus subsp. fetus (strain 82-40).